Reading from the N-terminus, the 638-residue chain is Probable potassium transport system protein Kup (638 aa).

12 consecutive transmembrane segments (helical) span residues 25–45, 65–85, 114–134, 152–172, 184–204, 226–246, 262–282, 291–311, 352–372, 382–402, 410–430, and 434–454; these read LAIA…LYSL, VISL…LLFV, AGAL…DAVI, PHLS…LFWI, FGPI…YHIV, LLQA…AEAL, AYGL…ALLI, PFFL…STVA, IYVP…VIGF, YGIA…VVMV, LLVG…FGAN, and VAQG…LLMT.

This sequence belongs to the HAK/KUP transporter (TC 2.A.72) family.

The protein resides in the cell inner membrane. The catalysed reaction is K(+)(in) + H(+)(in) = K(+)(out) + H(+)(out). Transport of potassium into the cell. Likely operates as a K(+):H(+) symporter. This chain is Probable potassium transport system protein Kup, found in Burkholderia lata (strain ATCC 17760 / DSM 23089 / LMG 22485 / NCIMB 9086 / R18194 / 383).